We begin with the raw amino-acid sequence, 163 residues long: Putative 4-hydroxy-4-methyl-2-oxoglutarate aldolase (163 aa).

Substrate-binding positions include 76–79 (GDML) and R98. Residue D99 coordinates a divalent metal cation.

Belongs to the class II aldolase/RraA-like family. Homotrimer. A divalent metal cation is required as a cofactor.

It catalyses the reaction 4-hydroxy-4-methyl-2-oxoglutarate = 2 pyruvate. The catalysed reaction is oxaloacetate + H(+) = pyruvate + CO2. Functionally, catalyzes the aldol cleavage of 4-hydroxy-4-methyl-2-oxoglutarate (HMG) into 2 molecules of pyruvate. Also contains a secondary oxaloacetate (OAA) decarboxylase activity due to the common pyruvate enolate transition state formed following C-C bond cleavage in the retro-aldol and decarboxylation reactions. This is Putative 4-hydroxy-4-methyl-2-oxoglutarate aldolase from Pseudomonas putida (strain GB-1).